The primary structure comprises 863 residues: Adenosylcobalamin biosynthesis bifunctional protein CobDQ (863 aa).

The tract at residues 1-373 (MNLPEHGGNL…LKSRKKTPSI (373 aa)) is putative threonine-phosphate decarboxylase. O-phospho-L-threonine contacts are provided by residues 6 to 7 (HG), N30, and N159. The residue at position 214 (K214) is an N6-(pyridoxal phosphate)lysine. The O-phospho-L-threonine site is built by R323 and R337. A cobyric acid synthase region spans residues 374–863 (MFQGTASNVG…NLIYRKLGLG (490 aa)). The 189-residue stretch at 622 to 810 (RLDVVLIDIP…IHGIFDKDEF (189 aa)) folds into the GATase cobBQ-type domain. The active-site Nucleophile is C704. The active site involves H802.

This sequence in the N-terminal section; belongs to the class-II pyridoxal-phosphate-dependent aminotransferase family. It in the C-terminal section; belongs to the CobB/CobQ family. CobQ subfamily. Requires pyridoxal 5'-phosphate as cofactor.

The enzyme catalyses O-phospho-L-threonine + H(+) = (R)-1-aminopropan-2-yl phosphate + CO2. It participates in cofactor biosynthesis; adenosylcobalamin biosynthesis. In terms of biological role, catalyzes two activities which are involved in the adenosylcobalamin biosynthesis: decarboxylates L-threonine-O-3-phosphate to yield (R)-1-amino-2-propanol O-2-phosphate, the precursor for the linkage between the nucleotide loop and the corrin ring in cobalamin, and catalyzes amidations at positions B, D, E, and G on adenosylcobyrinic A,C-diamide. NH(2) groups are provided by glutamine, and one molecule of ATP is hydrogenolyzed for each amidation. This is Adenosylcobalamin biosynthesis bifunctional protein CobDQ (cobDQ) from Leptospira interrogans serogroup Icterohaemorrhagiae serovar Lai (strain 56601).